The chain runs to 402 residues: uncharacterized protein (402 aa).

The interval 332–402 is disordered; the sequence is MFSSSSSSSE…PEPPPGKPGR (71 aa). Residues 370–379 are compositionally biased toward polar residues; the sequence is SETTSLQQYS. A compositionally biased stretch (pro residues) spans 393–402; it reads PEPPPGKPGR.

This is an uncharacterized protein from Mus musculus (Mouse).